The primary structure comprises 1045 residues: E3 ubiquitin-protein ligase Topors (1045 aa).

The interval 1–35 (MGSQPPLGSPLSREEGEAPPPAPASEGRRRSRRVR) is disordered. Residues 1–195 (MGSQPPLGSP…RERNASVYSP (195 aa)) form an E3 ubiquitin-protein ligase activity region. The interval 51-374 (ELAASAPARP…MAAFDQHANY (324 aa)) is required for DNA-binding. Glycyl lysine isopeptide (Lys-Gly) (interchain with G-Cter in SUMO2) cross-links involve residues Lys-73, Lys-76, Lys-83, and Lys-88. A Phosphoserine modification is found at Ser-98. Residues 103–142 (CPICLDRFDNVSYLDRCLHKFCFRCVQEWSKNKAECPLCK) form an RING-type zinc finger. A Glycyl lysine isopeptide (Lys-Gly) (interchain with G-Cter in SUMO2) cross-link involves residue Lys-159. At Ser-194 the chain carries Phosphoserine. A Glycyl lysine isopeptide (Lys-Gly) (interchain with G-Cter in SUMO2) cross-link involves residue Lys-249. The segment at 437–574 (SLLNTSDSSD…STSLSSPRNL (138 aa)) is required for sumoylation and localization to discrete nuclear foci. The interaction with SUMO1 stretch occupies residues 437–654 (SLLNTSDSSD…RSRTRDSSWS (218 aa)). The tract at residues 442-475 (SDSSDEELVTGGATSQIQGVQTNDDLNNDSDDSS) is disordered. Residues 453–463 (GATSQIQGVQT) are compositionally biased toward polar residues. The interval 456–731 (SQIQGVQTND…RRTLSRAHYS (276 aa)) is interaction with p53/TP53. The segment at 456–882 (SQIQGVQTND…GKATDTTKHH (427 aa)) is interaction with TOP1. Phosphoserine is present on Ser-499. The segment at 511 to 692 (ETVKTQEQEQ…RSRNRDRYYL (182 aa)) is disordered. The span at 521 to 534 (SYSSGDSDVSRCSS) shows a compositional bias: low complexity. A compositionally biased stretch (basic and acidic residues) spans 539–565 (LGKDEQINKGHCDSSTRIKSKKEEKRS). Residue Lys-560 forms a Glycyl lysine isopeptide (Lys-Gly) (interchain with G-Cter in SUMO) linkage. Positions 566 to 578 (TSLSSPRNLNSSV) are enriched in polar residues. Ser-585 is modified (phosphoserine). 3 stretches are compositionally biased toward basic residues: residues 588 to 597 (NHRHRKRGRS), 613 to 630 (KNHR…KRSR), and 637 to 647 (PRGRRDKKRSR). The segment covering 654 to 669 (SRRSQTLSLSSESTSR) has biased composition (low complexity). A Glycyl lysine isopeptide (Lys-Gly) (interchain with G-Cter in SUMO2) cross-link involves residue Lys-701. The disordered stretch occupies residues 713–936 (RDGYESSYRR…DNSGPQDPLQ (224 aa)). Ser-718 carries the post-translational modification Phosphoserine; by PLK1. Over residues 721–730 (RRRTLSRAHY) the composition is skewed to basic residues. Over residues 731–747 (SRQSSSPEFRVQSFSER) the composition is skewed to polar residues. The residue at position 734 (Ser-734) is a Phosphoserine. Basic and acidic residues-rich tracts occupy residues 755–766 (NHSERKYYYYER) and 816–825 (FASKAKDSHY). Glycyl lysine isopeptide (Lys-Gly) (interchain with G-Cter in SUMO2) cross-links involve residues Lys-819 and Lys-837. A compositionally biased stretch (basic residues) spans 854-863 (KHKRRKRKTR). The interaction with UBE2I stretch occupies residues 854–917 (KHKRRKRKTR…ITIDSDSDKD (64 aa)). Ser-864 and Ser-866 each carry phosphoserine. The span at 880–897 (KHHKKKKKKHKKKHKKHH) shows a compositional bias: basic residues. Residues Ser-912, Ser-914, and Ser-1028 each carry the phosphoserine modification. The span at 913 to 923 (DSDKDSEVKED) shows a compositional bias: basic and acidic residues.

As to quaternary structure, interacts with PARK7/DJ-1. Interacts with TOP1. Interacts with p53/TP53; can both ubiquitinate and sumoylate p53/TP53. Interacts with the SUMO1 conjugating enzyme UBE2I. Interacts with SUMO1. Interacts with NKX3-1; polyubiquitinates NKX3-1 and induces its proteasomal degradation. Interacts with SIN3A; sumoylates SIN3A. Interacts with IKBKE; induced by DNA damage. In terms of processing, phosphorylation at Ser-98 regulates the E3 ubiquitin-protein ligase activity but not the SUMO1-protein ligase activity. Phosphorylation at Ser-718 increases the E3 ubiquitin-protein ligase activity versus the SUMO1-protein ligase activity resulting in increased p53/TP53 ubiquitination and degradation. Post-translationally, sumoylated. In terms of tissue distribution, expressed at highest levels in testis and at lower levels in adrenal gland, bone marrow, brain, colon, heart, kidney, liver, muscle, ovary, pancreas, placenta, prostate, skeletal muscle, skin, small intestine, spleen, stomach, testis, thymus, thyroid and uterus. Expressed in the alveolar epithelium of the lung. Expression is commonly decreased in colon adenocarcinomas and lung cancers.

Its subcellular location is the nucleus. It localises to the PML body. It carries out the reaction S-ubiquitinyl-[E2 ubiquitin-conjugating enzyme]-L-cysteine + [acceptor protein]-L-lysine = [E2 ubiquitin-conjugating enzyme]-L-cysteine + N(6)-ubiquitinyl-[acceptor protein]-L-lysine.. Functionally, functions as an E3 ubiquitin-protein ligase and as an E3 SUMO1-protein ligase. Probable tumor suppressor involved in cell growth, cell proliferation and apoptosis that regulates p53/TP53 stability through ubiquitin-dependent degradation. May regulate chromatin modification through sumoylation of several chromatin modification-associated proteins. May be involved in DNA damage-induced cell death through IKBKE sumoylation. The polypeptide is E3 ubiquitin-protein ligase Topors (TOPORS) (Homo sapiens (Human)).